A 738-amino-acid chain; its full sequence is Outer membrane protein assembly factor BamA (738 aa).

The signal sequence occupies residues 1–13; it reads MVWLLFLSSFCFA. POTRA domains are found at residues 14-81, 82-159, 162-248, 251-329, and 332-404; these read DEVV…LQEN, PILR…VKEA, TVIR…LKEG, YSFG…VVST, and YRIR…VKER.

The protein belongs to the BamA family. In terms of assembly, part of the Bam complex.

It localises to the cell outer membrane. In terms of biological role, part of the outer membrane protein assembly complex, which is involved in assembly and insertion of beta-barrel proteins into the outer membrane. This chain is Outer membrane protein assembly factor BamA, found in Neorickettsia risticii (strain Illinois).